The sequence spans 77 residues: Teretoxin Tan15.2 (77 aa).

An N-terminal signal peptide occupies residues 1-21 (MTRLTVVFLAILVLLPLATSN). A propeptide spanning residues 22-40 (SGADEAPASLSDLLHRTKR) is cleaved from the precursor.

In terms of processing, contains 4 disulfide bonds. Expressed by the venom duct.

Its subcellular location is the secreted. The polypeptide is Teretoxin Tan15.2 (Terebra anilis (Auger snail)).